A 121-amino-acid polypeptide reads, in one-letter code: Securin (121 aa).

The segment at 1–24 is disordered; it reads RATEKSVKTNGPLKQKQTTFSAKK. 2 consecutive short sequence motifs (TEK-box) follow at residues 3-5 and 26-28; these read TEK. The disordered stretch occupies residues 93–121; that stretch reads LGPPSPLNMPSPPWESDVLQSPSSILSTL. Residues 95 to 105 carry the SH3-binding motif; it reads PPSPLNMPSPP. A compositionally biased stretch (pro residues) spans 95–105; that stretch reads PPSPLNMPSPP. Position 97 is a phosphoserine; by CDK1 (S97). The span at 110–121 shows a compositional bias: polar residues; it reads VLQSPSSILSTL.

This sequence belongs to the securin family. In terms of assembly, interacts with the caspase-like ESPL1, and prevents its protease activity probably by covering its active site. Interacts with p53/TP53 and blocks its activity probably by blocking its binding to DNA. Interacts with the Ku 70 kDa subunit of ds-DNA kinase. Interacts with PTTG1IP. Interacts with RPS10 and DNAJA1. In terms of processing, phosphorylated by CDK1 during mitosis. Phosphorylated in vitro by ds-DNA kinase. Post-translationally, ubiquitinated through 'Lys-11' linkage of ubiquitin moieties by the anaphase promoting complex (APC) at the onset of anaphase, conducting to its degradation. 'Lys-11'-linked ubiquitination is mediated by the E2 ligase UBE2C/UBCH10.

It localises to the cytoplasm. Its subcellular location is the nucleus. In terms of biological role, regulatory protein, which plays a central role in chromosome stability, in the p53/TP53 pathway, and DNA repair. Probably acts by blocking the action of key proteins. During the mitosis, it blocks Separase/ESPL1 function, preventing the proteolysis of the cohesin complex and the subsequent segregation of the chromosomes. At the onset of anaphase, it is ubiquitinated, conducting to its destruction and to the liberation of ESPL1. Its function is however not limited to a blocking activity, since it is required to activate ESPL1. Negatively regulates the transcriptional activity and related apoptosis activity of p53/TP53. The negative regulation of p53/TP53 may explain the strong transforming capability of the protein when it is overexpressed. May also play a role in DNA repair via its interaction with Ku, possibly by connecting DNA damage-response pathways with sister chromatid separation. In Sus scrofa (Pig), this protein is Securin (PTTG1).